A 44-amino-acid chain; its full sequence is Photosystem I reaction center subunit IX (44 aa).

A helical membrane pass occupies residues 7–27 (YLSVAPVLTTLWFGSLAGLLI).

This sequence belongs to the PsaJ family.

It is found in the plastid. The protein resides in the chloroplast thylakoid membrane. In terms of biological role, may help in the organization of the PsaE and PsaF subunits. This is Photosystem I reaction center subunit IX from Drimys granadensis.